Reading from the N-terminus, the 118-residue chain is C-type natriuretic peptide 2 (118 aa).

Residues 1-22 (MHFCHIVGWGLVLAVLYLRTEA) form the signal peptide. Positions 23–96 (KPVAQAHQKS…SRKIKGINKK (74 aa)) are excised as a propeptide. A disulfide bond links cysteine 102 and cysteine 118.

It belongs to the natriuretic peptide family.

It localises to the secreted. In terms of biological role, exhibits natriuretic and vasodepressor activity. Has a cGMP-stimulating activity. This chain is C-type natriuretic peptide 2, found in Aquarana catesbeiana (American bullfrog).